The following is a 184-amino-acid chain: Gremlin-1 (184 aa).

An N-terminal signal peptide occupies residues 1 to 24 (MSRTAYTVGALLLLLGTLLPAAEG). The segment at 24–77 (GKKKGSQGAIPPPDKAQHNDSEQTQSPQQPGSRNRGRGQGRGTAMPGEEVLESS) is disordered. A glycan (N-linked (GlcNAc...) asparagine) is linked at N42. Disulfide bonds link C94/C144, C108/C158, C118/C176, and C122/C178. A CTCK domain is found at 94 to 184 (CKTQPLKQTI…QCRCISIDLD (91 aa)).

Belongs to the DAN family. Homodimer; can also form homooligomers. Interacts with BMP2; can form higher oligomers with BMP2. Interacts with SLIT1 and SLIT2 in a glycosylation-dependent manner. Highly expressed in small intestine, fetal brain and colon. Expression is restricted to intestinal subepithelial myofibroblasts (ISEMFs) at the crypt base. In subjects with HMPS1, by contrast, GREM1 is expressed, not only in basal ISEMFs, but also at very high levels in epithelial cells (predominantly colonocytes), with expression extending most of the way up the sides of the crypt. Weakly expressed in brain, ovary, prostate, pancreas and skeletal muscle. In brain found in the region localized around the internal capsule in the large subcortical nuclei, including caudate, putamen, substantia nigra, thalamus and subthalamus. Predominantly expressed in normal cells including neurons, astrocytes and fibroblasts.

It localises to the secreted. Functionally, cytokine that may play an important role during carcinogenesis and metanephric kidney organogenesis, as a BMP antagonist required for early limb outgrowth and patterning in maintaining the FGF4-SHH feedback loop. Down-regulates the BMP4 signaling in a dose-dependent manner. Antagonist of BMP2; inhibits BMP2-mediated differentiation of osteoblasts (in vitro). Acts as inhibitor of monocyte chemotaxis. Can inhibit the growth or viability of normal cells but not transformed cells when is overexpressed. In Homo sapiens (Human), this protein is Gremlin-1 (GREM1).